Reading from the N-terminus, the 171-residue chain is ATP synthase subunit b (171 aa).

Residues 10-30 (GLYYGDSIFYAVCFLLLMWII) traverse the membrane as a helical segment.

This sequence belongs to the ATPase B chain family. In terms of assembly, F-type ATPases have 2 components, F(1) - the catalytic core - and F(0) - the membrane proton channel. F(1) has five subunits: alpha(3), beta(3), gamma(1), delta(1), epsilon(1). F(0) has three main subunits: a(1), b(2) and c(10-14). The alpha and beta chains form an alternating ring which encloses part of the gamma chain. F(1) is attached to F(0) by a central stalk formed by the gamma and epsilon chains, while a peripheral stalk is formed by the delta and b chains.

Its subcellular location is the cell membrane. Its function is as follows. F(1)F(0) ATP synthase produces ATP from ADP in the presence of a proton or sodium gradient. F-type ATPases consist of two structural domains, F(1) containing the extramembraneous catalytic core and F(0) containing the membrane proton channel, linked together by a central stalk and a peripheral stalk. During catalysis, ATP synthesis in the catalytic domain of F(1) is coupled via a rotary mechanism of the central stalk subunits to proton translocation. Component of the F(0) channel, it forms part of the peripheral stalk, linking F(1) to F(0). The polypeptide is ATP synthase subunit b (Levilactobacillus brevis (strain ATCC 367 / BCRC 12310 / CIP 105137 / JCM 1170 / LMG 11437 / NCIMB 947 / NCTC 947) (Lactobacillus brevis)).